The following is a 284-amino-acid chain: CUE domain-containing protein 2 (284 aa).

The region spanning 141–184 (EELPGVDVLLEVFPTCSMEQAQWVLAKARGDLEEAVHMLVEGKE) is the CUE domain. Positions 183–204 (KEEGPPGWDGPSQDLPRRLRGP) are disordered.

The protein belongs to the CUEDC2 family. Interacts with PGR and ESR1.

The protein localises to the cytoplasm. It is found in the nucleus. Its function is as follows. Controls PGR and ESR1 protein levels through their targeting for ubiquitination and subsequent proteasomal degradation. The protein is CUE domain-containing protein 2 (Cuedc2) of Mus musculus (Mouse).